The primary structure comprises 449 residues: Putative gustatory receptor 77a (449 aa).

Over 1–27 the chain is Cytoplasmic; it reads MPLPLGDPLALAVSPQLGYIRITAMPR. The helical transmembrane segment at 28 to 50 threads the bilayer; the sequence is WLQLPGMSALGILYSLTRVFGLM. Residues 51 to 70 lie on the Extracellular side of the membrane; the sequence is ATANWSPRGIKRVRQSLYLR. Residues 71 to 93 traverse the membrane as a helical segment; the sequence is IHGCVMLIFVGCFSPFAFWCIFQ. Over 94-102 the chain is Cytoplasmic; the sequence is RMAFLRQNR. A helical transmembrane segment spans residues 103–125; it reads ILLMIGFNRYVLLLVCAFMTLWI. Topologically, residues 126–205 are extracellular; that stretch reads HCFKQAEIIG…VRRNFMYACS (80 aa). Residues 206 to 228 form a helical membrane-spanning segment; sequence LVFVSVCQAILQLSLGMYTMAIL. Topologically, residues 229–298 are cytoplasmic; it reads FLGHLVRHSN…LLKLHRSICS (70 aa). A helical membrane pass occupies residues 299 to 321; it reads LCAVQAVCFLGFVPLECTIHLFF. The Extracellular segment spans residues 322 to 340; it reads TYFMKYSKFILRKYGRSFP. Residues 341-363 traverse the membrane as a helical segment; the sequence is LNYFAIAFLVGLFTNLLLVILPT. Residues 364–420 are Cytoplasmic-facing; that stretch reads YYSERRFNCTREIIKGGGLAFPSRITVKQLRHTMHFYGLYLKNVEHVFAVSACGLFK. Residues 421–443 form a helical membrane-spanning segment; that stretch reads LNNAILFCIVGAILEYLMILIQF. At 444 to 449 the chain is on the extracellular side; it reads DKVLNK.

The protein belongs to the insect chemoreceptor superfamily. Gustatory receptor (GR) family. Gr77a subfamily. In terms of tissue distribution, in larvae, is expressed in dorsal pharyngeal sense organ.

The protein localises to the cell membrane. In terms of biological role, probable gustatory receptor which mediates acceptance or avoidance behavior, depending on its substrates. The chain is Putative gustatory receptor 77a (Gr77a) from Drosophila melanogaster (Fruit fly).